Reading from the N-terminus, the 65-residue chain is Conotoxin Cal1.3 (65 aa).

The N-terminal stretch at 1–18 (MRCLPVFIILLLLASTAA) is a signal peptide. A propeptide spanning residues 19–49 (VDVAGSKLKRRLERKPYQGSQAYVKKTAFGL) is cleaved from the precursor. Disulfide bonds link Cys52/Cys62 and Cys53/Cys59. Pro61 is subject to 4-hydroxyproline. Cysteine amide is present on Cys62.

It belongs to the conotoxin T superfamily. As to expression, expressed by the venom duct.

It is found in the secreted. Functionally, probable neurotoxin with unknown target. Possibly targets ion channels. In Californiconus californicus (California cone), this protein is Conotoxin Cal1.3.